Consider the following 142-residue polypeptide: Large ribosomal subunit protein bL21 (142 aa).

The segment covering 74-84 (RRRQNSKRTRG) has biased composition (basic residues). The disordered stretch occupies residues 74–142 (RRRQNSKRTR…KAAAKAESAE (69 aa)). Over residues 107-125 (KAAEKKAPKADAAEGEAAK) the composition is skewed to basic and acidic residues. Over residues 126–135 (PKKAAPKKAA) the composition is skewed to basic residues.

The protein belongs to the bacterial ribosomal protein bL21 family. As to quaternary structure, part of the 50S ribosomal subunit. Contacts protein L20.

Functionally, this protein binds to 23S rRNA in the presence of protein L20. The sequence is that of Large ribosomal subunit protein bL21 from Brucella melitensis biotype 2 (strain ATCC 23457).